An 880-amino-acid polypeptide reads, in one-letter code: Alanine--tRNA ligase (880 aa).

His-548, His-552, Cys-651, and His-655 together coordinate Zn(2+).

The protein belongs to the class-II aminoacyl-tRNA synthetase family. It depends on Zn(2+) as a cofactor.

It localises to the cytoplasm. The catalysed reaction is tRNA(Ala) + L-alanine + ATP = L-alanyl-tRNA(Ala) + AMP + diphosphate. Functionally, catalyzes the attachment of alanine to tRNA(Ala) in a two-step reaction: alanine is first activated by ATP to form Ala-AMP and then transferred to the acceptor end of tRNA(Ala). Also edits incorrectly charged Ser-tRNA(Ala) and Gly-tRNA(Ala) via its editing domain. The sequence is that of Alanine--tRNA ligase from Tropheryma whipplei (strain TW08/27) (Whipple's bacillus).